A 69-amino-acid polypeptide reads, in one-letter code: Putative membrane protein insertion efficiency factor (69 aa).

It belongs to the UPF0161 family.

Its subcellular location is the cell inner membrane. Could be involved in insertion of integral membrane proteins into the membrane. This chain is Putative membrane protein insertion efficiency factor, found in Chromobacterium violaceum (strain ATCC 12472 / DSM 30191 / JCM 1249 / CCUG 213 / NBRC 12614 / NCIMB 9131 / NCTC 9757 / MK).